A 342-amino-acid polypeptide reads, in one-letter code: Dihydroorotase (342 aa).

Residues His-13 and His-15 each coordinate Zn(2+). Substrate-binding positions include 15–17 (HLR) and Asn-41. 3 residues coordinate Zn(2+): Lys-97, His-134, and His-172. Lys-97 bears the N6-carboxylysine mark. His-134 contributes to the substrate binding site. Leu-217 is a substrate binding site. Residue Asp-245 coordinates Zn(2+). The active site involves Asp-245. The substrate site is built by His-249 and Ala-261.

It belongs to the metallo-dependent hydrolases superfamily. DHOase family. Class II DHOase subfamily. Homodimer. Zn(2+) serves as cofactor.

The catalysed reaction is (S)-dihydroorotate + H2O = N-carbamoyl-L-aspartate + H(+). Its pathway is pyrimidine metabolism; UMP biosynthesis via de novo pathway; (S)-dihydroorotate from bicarbonate: step 3/3. Functionally, catalyzes the reversible cyclization of carbamoyl aspartate to dihydroorotate. The polypeptide is Dihydroorotase (Shewanella amazonensis (strain ATCC BAA-1098 / SB2B)).